The sequence spans 336 residues: NmrA-like family domain-containing oxidoreductase malD (336 aa).

Residues 12-17 (GGTGNQ), 40-44 (RDPTS), 61-62 (DG), 82-84 (TNS), K140, and 163-166 (FMEA) each bind NADP(+).

The protein belongs to the NmrA-type oxidoreductase family.

NmrA-like family domain-containing oxidoreductase; part of the gene cluster that mediates the biosynthesis of malbrancheamide, a dichlorinated fungal indole alkaloid that belongs to a family of natural products containing a characteristic bicyclo[2.2.2]diazaoctane core. The first step of malbrancheamide biosynthesis involves coupling of L-proline and L-tryptophan by malG, a bimodular NRPS, to produce L-Pro-L-Trp aldehyde through reductive offloading. This compound undergoes spontaneous cyclization and dehydration to give a dienamine which is reverse prenylated at C-2 by malE. The other prenyltransferase present in the cluster, malB, displays modest activity, suggesting that may be a redundant gene in the pathway. Subsequently, a [4+2] Diels-Alder cyclo-addition catalyzed by the bifunctional enzyme malC forms the characteristic bicyclo[2.2.2]diazaoctane ring of premalbrancheamid. Finally, the flavin-dependent halogenase malA catalyzes the iterative dichlorination of the indole ring of premalbrancheamide to yield C-9 monochlorinated malbrancheamide B, C-8 monochlorinated isomalbrancheamide B, and dichlorinated malbrancheamide. MalA is also able to brominate premalbrancheamide at C-9 to yield malbrancheamide C, and, to a lesser extend, at C-8 to yield isomalbrancheamide C. Finally, malA can brominate C-9 monochlorinated malbrancheamide B at C-8 to yield malbrancheamide D, or C-8 monochlorinated isomalbrancheamide B at C-9 to produce isomalbrancheamide D. The protein is NmrA-like family domain-containing oxidoreductase malD of Malbranchea aurantiaca.